The chain runs to 131 residues: Pancreatic polypeptide prohormone (131 aa).

Positions 1–29 (MAAAHRCLFLLLLSTCVALLLQPPLGALG) are cleaved as a signal peptide. Tyrosine 65 carries the post-translational modification Tyrosine amide.

This sequence belongs to the NPY family.

The protein localises to the secreted. Its function is as follows. Hormone secreted by pancreatic cells that acts as a regulator of pancreatic and gastrointestinal functions probably by signaling through the G protein-coupled receptor NPY4R2. The sequence is that of Pancreatic polypeptide prohormone (PPY) from Bos taurus (Bovine).